Consider the following 427-residue polypeptide: UDP-N-acetyl-D-mannosamine dehydrogenase (427 aa).

The NAD(+) site is built by Y20, I21, D40, R45, T92, and T130. R157, V158, K209, N213, R216, H247, R249, and G260 together coordinate UDP-N-acetyl-alpha-D-mannosaminouronate. The Proton donor/acceptor role is filled by K209. The active-site Nucleophile is the C263. Positions 317 and 318 each coordinate UDP-N-acetyl-alpha-D-mannosaminouronate. R325 is a binding site for NAD(+). K403 contributes to the UDP-N-acetyl-alpha-D-mannosaminouronate binding site.

Belongs to the UDP-glucose/GDP-mannose dehydrogenase family. Homotetramer; probably dimer of dimers.

The catalysed reaction is UDP-N-acetyl-alpha-D-mannosamine + 2 NAD(+) + H2O = UDP-N-acetyl-alpha-D-mannosaminouronate + 2 NADH + 3 H(+). Functionally, catalyzes the four-electron oxidation of UDP-N-acetyl-D-mannosamine (UDP-ManNAc), reducing NAD(+) and releasing UDP-N-acetylmannosaminuronic acid (UDP-ManNAcA). The sequence is that of UDP-N-acetyl-D-mannosamine dehydrogenase (wecC) from Methanocaldococcus jannaschii (strain ATCC 43067 / DSM 2661 / JAL-1 / JCM 10045 / NBRC 100440) (Methanococcus jannaschii).